The following is a 317-amino-acid chain: uncharacterized protein (317 aa).

The protein belongs to the asfivirus F317L family.

The protein resides in the virion. This is an uncharacterized protein from African swine fever virus (strain Badajoz 1971 Vero-adapted) (Ba71V).